Reading from the N-terminus, the 376-residue chain is Gibberellin 20 oxidase 4 (376 aa).

One can recognise a Fe2OG dioxygenase domain in the interval 222–322 (DNESIFRLNY…RKTLAFFLCP (101 aa)). Fe cation-binding residues include H247, D249, and H303. R313 is a catalytic residue.

This sequence belongs to the iron/ascorbate-dependent oxidoreductase family. GA20OX subfamily. Fe(2+) serves as cofactor. The cofactor is L-ascorbate. As to expression, expressed in roots. Detected in leaves, inflorescences and siliques, but not in stems and dry seeds.

The enzyme catalyses gibberellin A12 + 2 2-oxoglutarate + 3 O2 + H(+) = gibberellin A9 + 2 succinate + 3 CO2 + 2 H2O. The catalysed reaction is gibberellin A53 + 2 2-oxoglutarate + 3 O2 + H(+) = gibberellin A20 + 2 succinate + 3 CO2 + 2 H2O. It functions in the pathway plant hormone biosynthesis; gibberellin biosynthesis. Its function is as follows. Key oxidase enzyme in the biosynthesis of gibberellin that catalyzes the conversion of GA12 and GA53 to GA9 and GA20 respectively, via a three-step oxidation at C-20 of the GA skeleton. The chain is Gibberellin 20 oxidase 4 (GA20OX4) from Arabidopsis thaliana (Mouse-ear cress).